The sequence spans 341 residues: L-threonine 3-dehydrogenase (341 aa).

C38 is a binding site for Zn(2+). Residues T40 and H43 each act as charge relay system in the active site. Zn(2+)-binding residues include H63, E64, C93, C96, C99, and C107. NAD(+) contacts are provided by residues I175, D195, R200, 262–264 (LGI), and 286–287 (IY).

It belongs to the zinc-containing alcohol dehydrogenase family. Homotetramer. Zn(2+) serves as cofactor.

It is found in the cytoplasm. The enzyme catalyses L-threonine + NAD(+) = (2S)-2-amino-3-oxobutanoate + NADH + H(+). It participates in amino-acid degradation; L-threonine degradation via oxydo-reductase pathway; glycine from L-threonine: step 1/2. Its function is as follows. Catalyzes the NAD(+)-dependent oxidation of L-threonine to 2-amino-3-ketobutyrate. The sequence is that of L-threonine 3-dehydrogenase from Escherichia coli O127:H6 (strain E2348/69 / EPEC).